The sequence spans 264 residues: uncharacterized protein (264 aa).

The signal sequence occupies residues Met1–Ser16. A lipid anchor (N-palmitoyl cysteine) is attached at Cys17. Cys17 carries S-diacylglycerol cysteine lipidation.

It localises to the cell inner membrane. This is an uncharacterized protein from Escherichia coli (strain K12).